Reading from the N-terminus, the 884-residue chain is Probable disease resistance protein At1g12290 (884 aa).

Residues 26–66 are a coiled coil; that stretch reads LYYIQNIKENLTSLEEAMEDLKALRDDLLRKVQTAEEGGLQ. An NB-ARC domain is found at 139-443; the sequence is AHPATRAVGE…CEGFIDGDEN (305 aa). ATP is bound at residue 182-189; the sequence is GMGGVGKT. LRR repeat units lie at residues 519–540, 541–563, 566–588, 590–612, 613–635, and 644–664; these read VVSR…PECP, KLTT…FFRS, RLVV…ISEL, SLRY…LKLK, KLMH…DHLS, and NLRM…ENLE.

The protein belongs to the disease resistance NB-LRR family.

Functionally, probable disease resistance protein. This chain is Probable disease resistance protein At1g12290, found in Arabidopsis thaliana (Mouse-ear cress).